Reading from the N-terminus, the 469-residue chain is Properdin (469 aa).

Residues methionine 1–serine 27 form the signal peptide. TSP type-1 domains are found at residues aspartate 28–arginine 76, serine 77–proline 134, methionine 136–proline 191, histidine 193–proline 255, alanine 257–proline 313, aspartate 315–proline 377, and lysine 379–lysine 462. Cystine bridges form between cysteine 32/cysteine 56, cysteine 43/cysteine 72, and cysteine 57/cysteine 75. 2 C-linked (Man) tryptophan glycosylation sites follow: tryptophan 83 and tryptophan 86. Disulfide bonds link cysteine 89–cysteine 127, cysteine 93–cysteine 133, cysteine 104–cysteine 111, cysteine 132–cysteine 170, cysteine 148–cysteine 184, cysteine 152–cysteine 190, and cysteine 163–cysteine 174. Residues tryptophan 139, tryptophan 142, and tryptophan 145 are each glycosylated (C-linked (Man) tryptophan). A glycan (O-linked (Fuc...) threonine) is linked at threonine 151. 3 C-linked (Man) tryptophan glycosylation sites follow: tryptophan 196, tryptophan 199, and tryptophan 202. Intrachain disulfides connect cysteine 205/cysteine 248, cysteine 209/cysteine 254, and cysteine 224/cysteine 238. Serine 208 carries an O-linked (Fuc...) serine glycan. The interval glutamate 218–cysteine 238 is disordered. C-linked (Man) tryptophan glycans are attached at residues tryptophan 260 and tryptophan 263. Disulfide bonds link cysteine 269–cysteine 306, cysteine 273–cysteine 312, and cysteine 284–cysteine 296. Threonine 272 is a glycosylation site (O-linked (Fuc...) threonine). Tryptophan 321 and tryptophan 324 each carry a C-linked (Man) tryptophan glycan. Intrachain disulfides connect cysteine 327/cysteine 370, cysteine 337/cysteine 376, and cysteine 350/cysteine 360. An interaction with Complement C3 beta chain region spans residues lysine 351–arginine 359. Residues tryptophan 382, tryptophan 385, and tryptophan 388 are each glycosylated (C-linked (Man) tryptophan). Cystine bridges form between cysteine 391–cysteine 455, cysteine 395–cysteine 461, and cysteine 407–cysteine 439. Residue asparagine 428 is glycosylated (N-linked (GlcNAc...) asparagine).

In plasma, properdin exists as dimers, trimers or tetramers in the relative proportions of 26:54:20. Interacts with the pro-C3-convertase enzyme complex (C3b-Bb) comprised of Complement C3 beta chain (C3b) and the Complement factor B Bb fragment (Bb), where it binds (via its TSP type-1 5 domain) with C3b and Bb. This interaction stabilizes the complex and allows it to become the active C3-convertase enzyme complex (C3b-Bb-FP). Interacts with C3b. Interacts with CFB.

The protein resides in the secreted. Its function is as follows. A positive regulator of the alternate pathway of complement. It binds to and stabilizes the C3- and C5-convertase enzyme complexes. Inhibits CFI-CFH mediated degradation of Inhibits CFI-CFH mediated degradation of Complement C3 beta chain (C3b). This Pongo abelii (Sumatran orangutan) protein is Properdin (CFP).